We begin with the raw amino-acid sequence, 198 residues long: Protein GrpE (198 aa).

The disordered stretch occupies residues 1–56 (MVEKKKSQAEKNNQSATEEEIEKAVKGSKRDSNAADEKNSASAAASSSAVSDAEPA). The span at 22–39 (EKAVKGSKRDSNAADEKN) shows a compositional bias: basic and acidic residues. Low complexity predominate over residues 40 to 56 (SASAAASSSAVSDAEPA).

The protein belongs to the GrpE family. In terms of assembly, homodimer.

It localises to the cytoplasm. In terms of biological role, participates actively in the response to hyperosmotic and heat shock by preventing the aggregation of stress-denatured proteins, in association with DnaK and GrpE. It is the nucleotide exchange factor for DnaK and may function as a thermosensor. Unfolded proteins bind initially to DnaJ; upon interaction with the DnaJ-bound protein, DnaK hydrolyzes its bound ATP, resulting in the formation of a stable complex. GrpE releases ADP from DnaK; ATP binding to DnaK triggers the release of the substrate protein, thus completing the reaction cycle. Several rounds of ATP-dependent interactions between DnaJ, DnaK and GrpE are required for fully efficient folding. The chain is Protein GrpE from Oenococcus oeni (strain ATCC BAA-331 / PSU-1).